The chain runs to 339 residues: Methionine synthase (339 aa).

Residues His212, Cys214, and Cys295 each coordinate Zn(2+).

Belongs to the archaeal MetE family. It depends on Zn(2+) as a cofactor.

Its pathway is amino-acid biosynthesis; L-methionine biosynthesis via de novo pathway. Functionally, catalyzes the transfer of a methyl group to L-homocysteine resulting in methionine formation. The physiological methyl donor is unknown. The chain is Methionine synthase from Sulfolobus acidocaldarius (strain ATCC 33909 / DSM 639 / JCM 8929 / NBRC 15157 / NCIMB 11770).